We begin with the raw amino-acid sequence, 445 residues long: Trigger factor (445 aa).

One can recognise a PPIase FKBP-type domain in the interval 162-247 (GDQVTIDAIG…IKAVHTAEPT (86 aa)).

It belongs to the FKBP-type PPIase family. Tig subfamily.

It is found in the cytoplasm. The enzyme catalyses [protein]-peptidylproline (omega=180) = [protein]-peptidylproline (omega=0). Involved in protein export. Acts as a chaperone by maintaining the newly synthesized protein in an open conformation. Functions as a peptidyl-prolyl cis-trans isomerase. In Rickettsia prowazekii (strain Madrid E), this protein is Trigger factor (tig).